The following is a 326-amino-acid chain: MCPLTLQVTGLMNVSEPNSSFAFVNEFILQGFSCEWTIQIFLFSLFTTTYALTITGNGAIAFVLWCDRRLHTPMYMFLGNFSFLEIWYVSSTVPKMLVNFLSEKKNISFAGCFLQFYFFFSLGTSECLLLTVMAFDQYLAICRPLLYPNIMTGHLYAKLVILCWVCGFLWFLIPIVLISQMPFCGPNIIDHVVCDPGPRFALDCVSAPRIQLFCYTLSSLVIFGNFLFIIGSYTLVLKAMLGMPSSTGRHKAFSTCGSHLAVVSLCYSSLMVMYVSPGLGHSTGMQKIETLFYAMVTPLFNPLIYSLQNKEIKAALRKVLGSSNII.

Residues 1 to 44 (MCPLTLQVTGLMNVSEPNSSFAFVNEFILQGFSCEWTIQIFLFS) lie on the Extracellular side of the membrane. Residues asparagine 13 and asparagine 18 are each glycosylated (N-linked (GlcNAc...) asparagine). A helical transmembrane segment spans residues 45–65 (LFTTTYALTITGNGAIAFVLW). Residues 66 to 72 (CDRRLHT) are Cytoplasmic-facing. The chain crosses the membrane as a helical span at residues 73 to 93 (PMYMFLGNFSFLEIWYVSSTV). Topologically, residues 94-112 (PKMLVNFLSEKKNISFAGC) are extracellular. N-linked (GlcNAc...) asparagine glycosylation occurs at asparagine 106. An intrachain disulfide couples cysteine 112 to cysteine 194. The chain crosses the membrane as a helical span at residues 113–133 (FLQFYFFFSLGTSECLLLTVM). At 134 to 158 (AFDQYLAICRPLLYPNIMTGHLYAK) the chain is on the cytoplasmic side. A helical membrane pass occupies residues 159 to 179 (LVILCWVCGFLWFLIPIVLIS). Topologically, residues 180 to 216 (QMPFCGPNIIDHVVCDPGPRFALDCVSAPRIQLFCYT) are extracellular. A helical transmembrane segment spans residues 217 to 237 (LSSLVIFGNFLFIIGSYTLVL). Topologically, residues 238 to 259 (KAMLGMPSSTGRHKAFSTCGSH) are cytoplasmic. The chain crosses the membrane as a helical span at residues 260 to 280 (LAVVSLCYSSLMVMYVSPGLG). At 281–287 (HSTGMQK) the chain is on the extracellular side. Residues 288–308 (IETLFYAMVTPLFNPLIYSLQ) form a helical membrane-spanning segment. Over 309 to 326 (NKEIKAALRKVLGSSNII) the chain is Cytoplasmic.

It belongs to the G-protein coupled receptor 1 family.

It is found in the cell membrane. Odorant receptor. This is Olfactory receptor 11H1 (OR11H1) from Homo sapiens (Human).